The sequence spans 314 residues: MSKNNHANHSNHLENHDLDNFSKTGYSNSRLNRHTMYTPEPKLSFDAMTIVGNLNKNNAHKLSEFMSVEPQIRLWDILQTKFKAKALQEKVYIEYDKVKADTWDRRNMRVEFNPNKLTHEEMLWLKQNIIDYMEDDGFTRLDLAFDFEYDLSDYYAMTDKSVKKTIFYGRNGKPETKYFGVRDSDRFIRIYNKKQERKDNADIKIMSEHLWRVEIELKRDMVDYWNDCFNDLHILQPDWKTIERTSDRAMVFMLLNDEEEWGKLERRTKNKYKKLIKEISLIDLTDLMKSTLKANEKQLQKQIDFWQREFRFWK.

The span at 1–10 (MSKNNHANHS) shows a compositional bias: polar residues. A disordered region spans residues 1–25 (MSKNNHANHSNHLENHDLDNFSKTG). Positions 11–20 (NHLENHDLDN) are enriched in basic and acidic residues.

It belongs to the plasmid replication initiation factor family.

Its function is as follows. This protein is probably a specific topoisomerase involved in initiating replication. This protein is specifically required and may be rate-limiting for replication of the plasmid in vivo. This chain is Replication initiation protein (repN), found in Staphylococcus aureus.